Reading from the N-terminus, the 142-residue chain is Hemoglobin subunit alpha-1 (142 aa).

S1 is modified (N-acetylserine). The Globin domain maps to 1-142; that stretch reads SLSDKDKAAV…VALALAQRYR (142 aa). H59 is a binding site for O2. A heme b-binding site is contributed by H88.

It belongs to the globin family. As to quaternary structure, hb1 is a heterotetramer of two alpha-2 chains and two beta chains. In terms of tissue distribution, red blood cells.

In terms of biological role, involved in oxygen transport from gills to the various peripheral tissues. This Notothenia neglecta (Yellowbelly rockcod) protein is Hemoglobin subunit alpha-1 (hba1).